Here is a 298-residue protein sequence, read N- to C-terminus: Mitochondrial intermembrane space import and assembly protein 40 (298 aa).

The N-terminal 33 residues, 1–33, are a transit peptide targeting the mitochondrion; sequence MYRTALRPSQSALRAIRSTTSPSALVSSGARRF. Residues 34–52 lie on the Mitochondrial matrix side of the membrane; it reads ASTTSAPKKKSTWKGAAVR. The chain crosses the membrane as a helical; Signal-anchor for type II membrane protein span at residues 53–69; it reads WGLAVAAVYYYNTSPIF. At 70–298 the chain is on the mitochondrial intermembrane side; it reads SDELPETAGT…TAANNNKKQQ (229 aa). Residues 101–159 form a disordered region; it reads RQAAEHAAARKAAQAAAKAAATPATPSESVEEQITKAEAEAEAVPEGDSKPRSESTEGV. The segment covering 110-121 has biased composition (low complexity); it reads RKAAQAAAKAAA. 3 disulfide bridges follow: cysteine 191–cysteine 193, cysteine 202–cysteine 235, and cysteine 212–cysteine 225. The 45-residue stretch at 199 to 243 folds into the CHCH domain; that stretch reads HGPCGEEFKAAFSCFVYSTEEPKGMDCIEKFSHMQDCFRKYPEVY. 2 short sequence motifs (cx9C motif) span residues 202–212 and 225–235; these read CGEEFKAAFSC and CIEKFSHMQDC. Residues 248 to 298 are disordered; that stretch reads ADDEEAERASAAAPAAEGTPAKEEPVENKKEEALEPATHDATAANNNKKQQ. Low complexity predominate over residues 256 to 266; that stretch reads ASAAAPAAEGT. Positions 267-280 are enriched in basic and acidic residues; sequence PAKEEPVENKKEEA.

In terms of assembly, monomer. Requires Cu(2+) as cofactor. Zn(2+) serves as cofactor.

The protein localises to the mitochondrion inner membrane. Functionally, required for the import and folding of small cysteine-containing proteins (small Tim) in the mitochondrial intermembrane space (IMS). Forms a redox cycle with ERV1 that involves a disulfide relay system. Precursor proteins to be imported into the IMS are translocated in their reduced form into the mitochondria. The oxidized form of MIA40 forms a transient intermolecular disulfide bridge with the reduced precursor protein, resulting in oxidation of the precursor protein that now contains an intramolecular disulfide bond and is able to undergo folding in the IMS. The chain is Mitochondrial intermembrane space import and assembly protein 40 (mia-40) from Neurospora crassa (strain ATCC 24698 / 74-OR23-1A / CBS 708.71 / DSM 1257 / FGSC 987).